The primary structure comprises 351 residues: Protein Wnt-4 (351 aa).

A signal peptide spans M1–A22. 11 disulfides stabilise this stretch: C78–C89, C128–C136, C138–C155, C206–C220, C208–C215, C280–C311, C296–C306, C310–C350, C326–C341, C328–C338, and C333–C334. A glycan (N-linked (GlcNAc...) asparagine) is linked at N88. S212 is lipidated: O-palmitoleoyl serine; by PORCN. An N-linked (GlcNAc...) asparagine glycan is attached at N297.

The protein belongs to the Wnt family. In terms of assembly, interacts with PORCN. Interacts with PKD1. Palmitoleoylation is required for efficient binding to frizzled receptors. Depalmitoleoylation leads to Wnt signaling pathway inhibition. In adults in lung and brain.

The protein localises to the secreted. It localises to the extracellular space. The protein resides in the extracellular matrix. In terms of biological role, ligand for members of the frizzled family of seven transmembrane receptors. Plays an important role in the embryonic development of the urogenital tract and the lung. Required for normal mesenchyme to epithelium transition during embryonic kidney development. Required for the formation of early epithelial renal vesicles during kidney development. Required for normal formation of the Mullerian duct in females, and normal levels of oocytes in the ovaries. Required for normal down-regulation of 3 beta-hydroxysteroid dehydrogenase in the ovary. Required for normal lung development and for normal patterning of trachael cartilage rings. This is Protein Wnt-4 (Wnt4) from Mus musculus (Mouse).